Here is a 427-residue protein sequence, read N- to C-terminus: MKLLKRLVSVFAIVLAVGSNAFAGDEVRIVIDEGVDGARPIAVVPFVGSAPEDISKIVADDLRNSGKFNPIAVSQMPQHPTSAAEVNPEAWSNIGIDAIVIGQVVPSGNGYSITYQLIDTVGASGTPGTVLMQNSYTVTNKWLRYGAHTVSDEVFEKLTAIRGAFRTRIAYVVQKNGGSQPYEVRVADYDGYNQFIVNRSAQPIMSPAWSPDGQRLAYVSFENKKSQLVVQDLNSGSRKVVASFQGHNGAPAFSPDGSRLAFASSRDGVLNIYVMGANGGTPTQLTSGAGNNTEPAWSPDGNSILFTSDRSGSPQVYRMDASGGNATAVGGRGSAQISADGKTLVMINGNNNVVKQDLTTGVSEVLSTSFLGESPSLSPNGIMIIYSSTQGLGKVLQLVSADGRFKASLPGSDGQVKFPAWSPYLTK.

Positions 1 to 23 (MKLLKRLVSVFAIVLAVGSNAFA) are cleaved as a signal peptide.

The protein belongs to the TolB family. As to quaternary structure, the Tol-Pal system is composed of five core proteins: the inner membrane proteins TolA, TolQ and TolR, the periplasmic protein TolB and the outer membrane protein Pal. They form a network linking the inner and outer membranes and the peptidoglycan layer.

The protein localises to the periplasm. Functionally, part of the Tol-Pal system, which plays a role in outer membrane invagination during cell division and is important for maintaining outer membrane integrity. This is Tol-Pal system protein TolB from Haemophilus influenzae (strain PittGG).